A 379-amino-acid chain; its full sequence is Chaperone protein DnaJ (379 aa).

Residues 5-71 enclose the J domain; the sequence is DYYEILGVSR…EKRAMYDRFG (67 aa). A CR-type zinc finger spans residues 149-231; it reads GTTIPIEYDR…CGGSGRIRKR (83 aa). Residues cysteine 162, cysteine 165, cysteine 179, cysteine 182, cysteine 205, cysteine 208, cysteine 219, and cysteine 222 each contribute to the Zn(2+) site. 4 CXXCXGXG motif repeats span residues 162–169, 179–186, 205–212, and 219–226; these read CSHCNGEG, CPKCHGTG, CNQCGGTG, and CHVCGGSG.

The protein belongs to the DnaJ family. In terms of assembly, homodimer. The cofactor is Zn(2+).

It localises to the cytoplasm. Participates actively in the response to hyperosmotic and heat shock by preventing the aggregation of stress-denatured proteins and by disaggregating proteins, also in an autonomous, DnaK-independent fashion. Unfolded proteins bind initially to DnaJ; upon interaction with the DnaJ-bound protein, DnaK hydrolyzes its bound ATP, resulting in the formation of a stable complex. GrpE releases ADP from DnaK; ATP binding to DnaK triggers the release of the substrate protein, thus completing the reaction cycle. Several rounds of ATP-dependent interactions between DnaJ, DnaK and GrpE are required for fully efficient folding. Also involved, together with DnaK and GrpE, in the DNA replication of plasmids through activation of initiation proteins. This Thermosipho africanus (strain TCF52B) protein is Chaperone protein DnaJ.